The following is a 78-amino-acid chain: MAAHCQVTGAQPGFGHSISHSHRRTKRRWNPNIQKKRYWVPSLRRNVTLNLSAKGIKVIDARGIDAVVNELIARGEKI.

The disordered stretch occupies residues 1–30 (MAAHCQVTGAQPGFGHSISHSHRRTKRRWN). Residues 19–30 (SHSHRRTKRRWN) are compositionally biased toward basic residues.

The protein belongs to the bacterial ribosomal protein bL28 family.

In Kocuria rhizophila (strain ATCC 9341 / DSM 348 / NBRC 103217 / DC2201), this protein is Large ribosomal subunit protein bL28.